Consider the following 201-residue polypeptide: DNA polymerase epsilon subunit C (201 aa).

Disordered regions lie at residues 102–165 and 178–201; these read KKRE…KSTR and SALD…STDP. Residues 117–144 show a composition bias toward acidic residues; sequence VVIEEPELHEDDGVEEEEEEDEVSEEEE. Composition is skewed to basic and acidic residues over residues 145–164 and 182–201; these read PVHN…DKST and VGEH…STDP. S186, S188, and S189 each carry phosphoserine.

As to quaternary structure, DNA polymerase epsilon is a heterotetramer consisting of POL2, DPB2, DPB3 and DPB4.

It localises to the nucleus. In terms of biological role, as accessory component of the DNA polymerase epsilon (DNA polymerase II) participates in chromosomal DNA replication. It is required during synthesis of the leading and lagging DNA strands at the replication fork and binds at/or near replication origins and moves along DNA with the replication fork. It has 3'-5' proofreading exonuclease activity that correct errors arising during DNA replication. It is also involved in DNA synthesis during DNA repair. This is DNA polymerase epsilon subunit C (DPB3) from Saccharomyces cerevisiae (strain ATCC 204508 / S288c) (Baker's yeast).